Here is a 401-residue protein sequence, read N- to C-terminus: Imidazolonepropionase (401 aa).

Fe(3+) contacts are provided by His-66 and His-68. Zn(2+) contacts are provided by His-66 and His-68. 4-imidazolone-5-propanoate-binding residues include Arg-75, Tyr-138, and His-171. Residue Tyr-138 participates in N-formimidoyl-L-glutamate binding. His-236 contributes to the Fe(3+) binding site. Zn(2+) is bound at residue His-236. Gln-239 is a 4-imidazolone-5-propanoate binding site. Fe(3+) is bound at residue Asp-311. Zn(2+) is bound at residue Asp-311. Residues Asn-313 and Gly-315 each contribute to the N-formimidoyl-L-glutamate site. Thr-316 contributes to the 4-imidazolone-5-propanoate binding site.

It belongs to the metallo-dependent hydrolases superfamily. HutI family. Zn(2+) serves as cofactor. It depends on Fe(3+) as a cofactor.

The protein localises to the cytoplasm. It catalyses the reaction 4-imidazolone-5-propanoate + H2O = N-formimidoyl-L-glutamate. It participates in amino-acid degradation; L-histidine degradation into L-glutamate; N-formimidoyl-L-glutamate from L-histidine: step 3/3. Functionally, catalyzes the hydrolytic cleavage of the carbon-nitrogen bond in imidazolone-5-propanoate to yield N-formimidoyl-L-glutamate. It is the third step in the universal histidine degradation pathway. This Acinetobacter baumannii (strain AB0057) protein is Imidazolonepropionase.